The primary structure comprises 313 residues: Ribosomal RNA small subunit methyltransferase H (313 aa).

S-adenosyl-L-methionine is bound by residues 35–37 (GGH), aspartate 55, phenylalanine 79, aspartate 101, and glutamine 108.

This sequence belongs to the methyltransferase superfamily. RsmH family.

Its subcellular location is the cytoplasm. The enzyme catalyses cytidine(1402) in 16S rRNA + S-adenosyl-L-methionine = N(4)-methylcytidine(1402) in 16S rRNA + S-adenosyl-L-homocysteine + H(+). Its function is as follows. Specifically methylates the N4 position of cytidine in position 1402 (C1402) of 16S rRNA. The chain is Ribosomal RNA small subunit methyltransferase H from Edwardsiella ictaluri (strain 93-146).